We begin with the raw amino-acid sequence, 159 residues long: Olfactory receptor-like protein COR8 (159 aa).

Over 1-16 (VAICNPLLYTISMPKS) the chain is Cytoplasmic. The helical transmembrane segment at 17–41 (LCMKLVAGSYLGGVLNSLTQTCCLL) threads the bilayer. Topologically, residues 42 to 82 (PLPFCGPNVINHYFCDTNPLLKLTCSDGRLNELLLVTFNGT) are extracellular. Asn-80 is a glycosylation site (N-linked (GlcNAc...) asparagine). A helical transmembrane segment spans residues 83 to 103 (ISMTVLLIIVISYVYILVSIL). Residues 104–116 (SIRSARGRHKAFS) are Cytoplasmic-facing. The chain crosses the membrane as a helical span at residues 117-137 (TCASHLLTVTLFYVPAGLSHM). Topologically, residues 138-148 (QPGSKYSLDME) are extracellular. The helical transmembrane segment at 149 to 159 (KVTAVFYTLLV) threads the bilayer.

This sequence belongs to the G-protein coupled receptor 1 family.

It localises to the cell membrane. Odorant receptor. This chain is Olfactory receptor-like protein COR8 (COR8), found in Gallus gallus (Chicken).